Consider the following 481-residue polypeptide: Cytochrome P450 monooygenase 2 (481 aa).

The chain crosses the membrane as a helical span at residues 12–32 (GSQLLPFYIAIFVFTLVPWAI). C418 is a heme binding site.

Belongs to the cytochrome P450 family. It depends on heme as a cofactor.

The protein resides in the membrane. It participates in plant hormone biosynthesis; gibberellin biosynthesis. Functionally, gibberellin 20-oxidase; part of the gene cluster that mediates the biosynthesis of gibberellins (GAs), diterpenoids that may provide a selective advantage during infection of the preferred host plant, rice. Gibberellins (GAs) are diterpenoids and are synthesized via the mevalonate pathway. Biosynthesis of the major metabolite GA3 (gibberellic acid) from geranylgeranyl diphosphate (GGPP) requires 13 steps. The GGPP produced by the geranylgeranyl diphosphate synthase GGS2 is converted to ent-kaurene via ent-copalyldiphosphate in a two-step cyclization reaction performed by the bifunctional ent-copalyl diphosphate synthase/ent-kaurene synthase enzyme (CPS/KS). Ent-Kaurene is metabolized to GAs by a series of oxidation reactions catalyzed by cytochrome P450 monooxygenases. Cytochrome P450 monooxygenase P450-4 is an ent-kaurene oxidase that catalyzes the three oxidation steps between ent-kaurene and ent-kaurenoic acid. The highly multifunctional cytochrome P450 monooxygenase P450-1 then catalyzes four steps involving oxidation at two carbon atoms, in the main pathway from ent-kaurenoic acid to GA14 via GA12-aldehyde as well as producing kaurenolides and fujenoic acids as by-products. The cytochrome P450 monooxygenase P450-2 then converts GA14 to GA4 by removal of C-20. GA4 is further converted to GA7 by the GA4 desaturase DES via 1,2-desaturation before cytochrome P450 monooxygenase P450-3, a 13-hydroxylase, hydroxylates GA7 to GA3, the final product of the GA-biosynthetic pathway. The polypeptide is Cytochrome P450 monooygenase 2 (Gibberella fujikuroi (strain CBS 195.34 / IMI 58289 / NRRL A-6831) (Bakanae and foot rot disease fungus)).